The sequence spans 252 residues: ATP synthase subunit a (252 aa).

6 helical membrane-spanning segments follow: residues 29–49, 87–107, 116–136, 146–166, 183–205, and 219–239; these read FTNV…FLFI, FFPL…IGLF, QIMI…GYGF, LFVP…IEVI, MLAG…ELGI, and VAIT…FTVL.

It belongs to the ATPase A chain family. F-type ATPases have 2 components, CF(1) - the catalytic core - and CF(0) - the membrane proton channel. CF(1) has five subunits: alpha(3), beta(3), gamma(1), delta(1), epsilon(1). CF(0) has three main subunits: a(1), b(2) and c(9-12). The alpha and beta chains form an alternating ring which encloses part of the gamma chain. CF(1) is attached to CF(0) by a central stalk formed by the gamma and epsilon chains, while a peripheral stalk is formed by the delta and b chains.

Its subcellular location is the cell inner membrane. Functionally, key component of the proton channel; it plays a direct role in the translocation of protons across the membrane. This is ATP synthase subunit a from Bartonella quintana (strain Toulouse) (Rochalimaea quintana).